The primary structure comprises 89 residues: Elongation factor 1-beta (89 aa).

This sequence belongs to the EF-1-beta/EF-1-delta family.

In terms of biological role, promotes the exchange of GDP for GTP in EF-1-alpha/GDP, thus allowing the regeneration of EF-1-alpha/GTP that could then be used to form the ternary complex EF-1-alpha/GTP/AAtRNA. In Methanobrevibacter smithii (strain ATCC 35061 / DSM 861 / OCM 144 / PS), this protein is Elongation factor 1-beta.